A 329-amino-acid polypeptide reads, in one-letter code: Biotin synthase (329 aa).

The Radical SAM core domain maps to 48–278; sequence FLGNGVDLCS…TKKIAVCGGR (231 aa). Residues C66, C70, and C73 each coordinate [4Fe-4S] cluster. [2Fe-2S] cluster is bound by residues S143 and C203.

This sequence belongs to the radical SAM superfamily. Biotin synthase family. As to quaternary structure, homodimer. It depends on [4Fe-4S] cluster as a cofactor. [2Fe-2S] cluster is required as a cofactor.

The catalysed reaction is (4R,5S)-dethiobiotin + (sulfur carrier)-SH + 2 reduced [2Fe-2S]-[ferredoxin] + 2 S-adenosyl-L-methionine = (sulfur carrier)-H + biotin + 2 5'-deoxyadenosine + 2 L-methionine + 2 oxidized [2Fe-2S]-[ferredoxin]. It participates in cofactor biosynthesis; biotin biosynthesis; biotin from 7,8-diaminononanoate: step 2/2. Functionally, catalyzes the conversion of dethiobiotin (DTB) to biotin by the insertion of a sulfur atom into dethiobiotin via a radical-based mechanism. The chain is Biotin synthase from Geobacter metallireducens (strain ATCC 53774 / DSM 7210 / GS-15).